The sequence spans 478 residues: UDP-N-acetylmuramate--L-alanine ligase (478 aa).

Position 120–126 (G120–T126) interacts with ATP.

This sequence belongs to the MurCDEF family.

It localises to the cytoplasm. The enzyme catalyses UDP-N-acetyl-alpha-D-muramate + L-alanine + ATP = UDP-N-acetyl-alpha-D-muramoyl-L-alanine + ADP + phosphate + H(+). It participates in cell wall biogenesis; peptidoglycan biosynthesis. In terms of biological role, cell wall formation. This chain is UDP-N-acetylmuramate--L-alanine ligase, found in Rickettsia felis (strain ATCC VR-1525 / URRWXCal2) (Rickettsia azadi).